Reading from the N-terminus, the 155-residue chain is DNA gyrase inhibitor (155 aa).

The protein belongs to the DNA gyrase inhibitor family. As to quaternary structure, interacts with DNA gyrase.

The protein resides in the cytoplasm. In terms of biological role, inhibits the supercoiling activity of DNA gyrase. Acts by inhibiting DNA gyrase at an early step, prior to (or at the step of) binding of DNA by the gyrase. It protects cells against toxins that target DNA gyrase, by inhibiting activity of these toxins and reducing the formation of lethal double-strand breaks in the cell. The chain is DNA gyrase inhibitor from Salmonella arizonae (strain ATCC BAA-731 / CDC346-86 / RSK2980).